The sequence spans 203 residues: Outer-membrane lipoprotein LolB (203 aa).

The N-terminal stretch at 1–21 (MRLSASLFHIALVTVLLVLAG) is a signal peptide. The N-palmitoyl cysteine moiety is linked to residue C22. C22 is lipidated: S-diacylglycerol cysteine.

It belongs to the LolB family. Monomer.

It is found in the cell outer membrane. Its function is as follows. Plays a critical role in the incorporation of lipoproteins in the outer membrane after they are released by the LolA protein. In Shewanella frigidimarina (strain NCIMB 400), this protein is Outer-membrane lipoprotein LolB.